Reading from the N-terminus, the 462-residue chain is Iroquois-class homeodomain protein irx-1-B (462 aa).

A DNA-binding region (homeobox; TALE-type) is located at residues 121–183; it reads DPGRPKNATR…NARRRLKKEN (63 aa). Disordered regions lie at residues 191–302, 314–339, and 405–462; these read GKED…PHSK, SPDG…QHPA, and SLSS…LPSA. 2 stretches are compositionally biased toward acidic residues: residues 210-220 and 228-239; these read EDDEEIDLESI and NDGEQSNEEEDE. Basic and acidic residues predominate over residues 240–257; sequence KLDHFRHGEKVSLKKESE. Residues 410–426 show a composition bias toward basic and acidic residues; sequence RTPERTSPKHSDRENLP. The segment covering 446–455 has biased composition (polar residues); sequence FSQQEGTSRI.

This sequence belongs to the TALE/IRO homeobox family.

It localises to the nucleus. Functionally, acts partially redundantly with other irx members in neural patterning. Required for formation of the posterior forebrain, midbrain, hindbrain, and to a lesser extent, spinal cord. Acts early in neural plate development to induce expression of some but not all proneural genes, and specify a neural precursor state. Also up-regulates repressors that prevent neuronal differentiation. Patterns the neuroectoderm in both the anterior/posterior and dorsal/ventral axes. Acts primarily as a transcriptional repressor during neural development, and binds to the bmp4 promoter to repress gene expression and thus mediate down-regulation of bmp4 by wnt signaling. Controls multiple processes through bmp4-repression including neural plate development, neural crest specification and Spemann organizer development. Involved in the specification of the preplacodal field at the anterior border of the neural plate. Regulates the genetic cascade of interactions that are necessary for positioning the isthmus organizer and the formation of the midbrain-hindbrain boundary. Required during at least two stages of pronephros kidney development; during neurula stages, maintains transcription of key renal genes to define the size and identity of the pronephric anlage, probably in part through regulation of bmp-signaling. Subsequently required for proper formation of the intermediate tubule segment of the pronephros. Acts principally as a transcriptional activator during pronephros development. The protein is Iroquois-class homeodomain protein irx-1-B (irx1-b) of Xenopus laevis (African clawed frog).